Consider the following 29-residue polypeptide: Cycloviolacin-O21 (29 aa).

The segment at residues 1–29 (GLPVCGETCVTGSCYTPGCTCSWPVCTRN) is a cross-link (cyclopeptide (Gly-Asn)). 3 cysteine pairs are disulfide-bonded: Cys5–Cys19, Cys9–Cys21, and Cys14–Cys26.

In terms of processing, this is a cyclic peptide. Expressed in leaves, petals, petioles, and runners but not in roots (at protein level).

Functionally, probably participates in a plant defense mechanism. The chain is Cycloviolacin-O21 from Viola odorata (Sweet violet).